Reading from the N-terminus, the 416-residue chain is 5-hydroxytryptamine receptor 1A-beta (416 aa).

The Extracellular segment spans residues 1-35 (MEGTNNTTGWTHFDSTSNRTSKSFDEEVKLSYQVV). N-linked (GlcNAc...) asparagine glycans are attached at residues Asn5, Asn6, and Asn18. The chain crosses the membrane as a helical span at residues 36-56 (TSFLLGALILCSIFGNACVVA). Residues 57-70 (AIALERSLQNVANY) are Cytoplasmic-facing. Residues 71–95 (LIGSLAVTDLMVSVLVLPMAALYQV) traverse the membrane as a helical segment. Residues 96–104 (LNRWTLGQI) lie on the Extracellular side of the membrane. The chain crosses the membrane as a helical span at residues 105–129 (PCDIFISLDMLCCTSSILHLCVIAL). An intrachain disulfide couples Cys106 to Cys189. Serotonin is bound by residues Asp113 and Cys117. The short motif at 130-132 (DRY) is the DRY motif; important for ligand-induced conformation changes element. The Cytoplasmic portion of the chain corresponds to 130-149 (DRYWAITEPIDYMKKRTPRR). The helical transmembrane segment at 150 to 171 (AAVLISVTWLVGFSISIPPMLI) threads the bilayer. The Extracellular portion of the chain corresponds to 172–195 (MRSQPSSMAEDRANSKQCKITQDP). Residues 196 to 218 (WYTIYSTFGAFYIPLTLMLVLYG) traverse the membrane as a helical segment. Topologically, residues 219–340 (RIFKAARFRI…LARERKTVKT (122 aa)) are cytoplasmic. 1D-myo-inositol 4-phosphate contacts are provided by Lys339, Thr340, and Gly346. Residues 341-364 (LGIIMGTFILCWLPFFIVALVMPF) traverse the membrane as a helical segment. At 365 to 372 (CQESCFMP) the chain is on the extracellular side. Residues 373–397 (HWLKDVINWLGYSNSLLNPIIYAYF) traverse the membrane as a helical segment. The NPxxY motif; important for ligand-induced conformation changes and signaling motif lies at 390–394 (NPIIY). Phe397, Asn398, and Lys399 together coordinate 1D-myo-inositol 4-phosphate. Residues 398-416 (NKDFQSAFKKIIKCHFCRA) lie on the Cytoplasmic side of the membrane.

It belongs to the G-protein coupled receptor 1 family. 5-hydroxytryptamine receptor subfamily.

Its subcellular location is the cell membrane. G-protein coupled receptor activity is regulated by lipids: phosphatidylinositol 4-phosphate increases HTR1A-mediated activity. G-protein coupled receptor for 5-hydroxytryptamine (serotonin). Also functions as a receptor for various drugs and psychoactive substances. Ligand binding causes a conformation change that triggers signaling via guanine nucleotide-binding proteins (G proteins) and modulates the activity of downstream effectors, such as adenylate cyclase. HTR1A is coupled to G(i)/G(o) G alpha proteins and mediates inhibitory neurotransmission: signaling inhibits adenylate cyclase activity and activates a phosphatidylinositol-calcium second messenger system that regulates the release of Ca(2+) ions from intracellular stores. Beta-arrestin family members regulate signaling by mediating both receptor desensitization and resensitization processes. The chain is 5-hydroxytryptamine receptor 1A-beta (htr1a-B) from Takifugu rubripes (Japanese pufferfish).